A 259-amino-acid polypeptide reads, in one-letter code: Merozoite surface protein CMZ-8 (259 aa).

The segment covering 1–108 has biased composition (pro residues); that stretch reads PLPFSPPSTP…STPVSPPSSP (108 aa). Disordered stretches follow at residues 1–127 and 174–203; these read PLPF…STSE and RPGS…RHKG. A run of 15 repeats spans residues 5-11, 12-18, 19-25, 26-32, 33-39, 40-46, 47-53, 54-60, 61-67, 68-74, 75-81, 82-88, 89-95, 96-102, and 103-109. The segment at 5-109 is 15 X 7 AA repeats of S-P-P-S-T-P-V; the sequence is SPPSTPVSPP…TPVSPPSSPA (105 aa). Residues 184-203 show a composition bias toward basic residues; the sequence is HCTRSTRSSRRMSRRHRHKG.

In Eimeria acervulina (Coccidian parasite), this protein is Merozoite surface protein CMZ-8.